An 824-amino-acid polypeptide reads, in one-letter code: Protein-glutamine gamma-glutamyltransferase K (824 aa).

Residues 1–10 (MEGPRSDVGR) are compositionally biased toward basic and acidic residues. Disordered regions lie at residues 1–44 (MEGP…GGRS) and 61–110 (DDWG…AAGD). At threonine 20 the chain carries Phosphothreonine. Serine 22, serine 70, serine 92, serine 100, and serine 103 each carry phosphoserine. Residues 65 to 76 (PEPSGSRSRGTS) are compositionally biased toward low complexity. Residues 85–100 (GDSRGRDSRGGRRPES) are compositionally biased toward basic and acidic residues. Active-site residues include cysteine 385, histidine 444, and aspartate 467. Ca(2+)-binding residues include asparagine 507, aspartate 509, glutamate 556, and glutamate 561. Residues 801-824 (RGFSEAVGDSRSGENIPMAFRGGA) are disordered. Serine 812 is modified (phosphoserine).

This sequence belongs to the transglutaminase superfamily. Transglutaminase family. In terms of assembly, interacts with PLAAT4. The cofactor is Ca(2+). Post-translationally, palmitoylated. The membrane anchorage region possesses a cluster of five cysteines within which fatty acid(s) may become thioester-linked. It is subject to phorbol ester-stimulated phosphorylation and is hypersensitive to proteolysis, which releases the enzyme in a soluble form. In terms of processing, tyrosine-phosphorylated.

It localises to the membrane. It catalyses the reaction L-glutaminyl-[protein] + L-lysyl-[protein] = [protein]-L-lysyl-N(6)-5-L-glutamyl-[protein] + NH4(+). In terms of biological role, catalyzes the cross-linking of proteins and the conjugation of polyamines to proteins. Responsible for cross-linking epidermal proteins during formation of the stratum corneum. Involved in cell proliferation. The polypeptide is Protein-glutamine gamma-glutamyltransferase K (Tgm1) (Rattus norvegicus (Rat)).